The following is an 80-amino-acid chain: Acyl carrier protein (80 aa).

Positions 2 to 77 constitute a Carrier domain; the sequence is KNIEERIKKI…KSIDFIQKKN (76 aa). Ser37 is subject to O-(pantetheine 4'-phosphoryl)serine.

The protein belongs to the acyl carrier protein (ACP) family. In terms of processing, 4'-phosphopantetheine is transferred from CoA to a specific serine of apo-ACP by AcpS. This modification is essential for activity because fatty acids are bound in thioester linkage to the sulfhydryl of the prosthetic group.

The protein localises to the cytoplasm. Its pathway is lipid metabolism; fatty acid biosynthesis. Carrier of the growing fatty acid chain in fatty acid biosynthesis. This is Acyl carrier protein from Buchnera aphidicola subsp. Acyrthosiphon pisum (strain APS) (Acyrthosiphon pisum symbiotic bacterium).